We begin with the raw amino-acid sequence, 365 residues long: Heat-inducible transcription repressor HrcA (365 aa).

It belongs to the HrcA family.

Functionally, negative regulator of class I heat shock genes (grpE-dnaK-dnaJ and groELS operons). Prevents heat-shock induction of these operons. The protein is Heat-inducible transcription repressor HrcA of Trichormus variabilis (strain ATCC 29413 / PCC 7937) (Anabaena variabilis).